We begin with the raw amino-acid sequence, 64 residues long: Large ribosomal subunit protein bL35 (64 aa).

The span at 1–14 (MKNKTHKGTAKRVK) shows a compositional bias: basic residues. The segment at 1–29 (MKNKTHKGTAKRVKVTGSGKLVREQANRR) is disordered.

This sequence belongs to the bacterial ribosomal protein bL35 family.

The polypeptide is Large ribosomal subunit protein bL35 (Corynebacterium glutamicum (strain R)).